The chain runs to 396 residues: Purine ribonucleoside efflux pump NepI (396 aa).

Over 1–21 (MSEFIAENRGANAITRPNWSA) the chain is Cytoplasmic. Residues 22 to 42 (VFSVAFCVACLIIVEFLPVSL) traverse the membrane as a helical segment. Over 43 to 54 (LTPMAQDLGISE) the chain is Periplasmic. The helical transmembrane segment at 55–75 (GVAGQSVTVTAFVAMFASLFI) threads the bilayer. Topologically, residues 76–85 (TQTIQATDRR) are cytoplasmic. Residues 86–106 (YVVILFAVLLTLSCLLVSFAN) traverse the membrane as a helical segment. Residue Ser107 is a topological domain, periplasmic. Residues 108 to 128 (FSLLLIGRACLGLALGGFWAM) traverse the membrane as a helical segment. Residues 129–147 (SASLTMRLVPPRTVPKALS) lie on the Cytoplasmic side of the membrane. The chain crosses the membrane as a helical span at residues 148–168 (VIFGAVSIALVIAAPLGSFLG). Topologically, residues 169-175 (ELIGWRN) are periplasmic. The helical transmembrane segment at 176 to 196 (VFNAAAAMGVLCIFWIIKSLP) threads the bilayer. Over 197-215 (SLPGEPSHQKQNTFRLLQR) the chain is Cytoplasmic. Residues 216–236 (PGVMAGMIAIFMSFAGQFAFF) traverse the membrane as a helical segment. Residues 237-255 (TYIRPVYMNLAGFGVDGLT) lie on the Periplasmic side of the membrane. A helical transmembrane segment spans residues 256–276 (LVLLSFGIASFVGTSLSSFIL). Topologically, residues 277–281 (KRSVK) are cytoplasmic. Residues 282–302 (LALAGAPFVLALSALVLTLWG) traverse the membrane as a helical segment. The Periplasmic segment spans residues 303 to 305 (SYK). The helical transmembrane segment at 306-326 (IVATGVAIIWGLTFALIPVGW) threads the bilayer. At 327–343 (STWITRSLADQAEKAGS) the chain is on the cytoplasmic side. Residues 344-364 (IQVAVIQLANTCGAAIGGYAL) form a helical membrane-spanning segment. Over 365-366 (DN) the chain is Periplasmic. A helical transmembrane segment spans residues 367–387 (IGLTSPLMLSGTLMLLTALLV). Over 388–396 (TAKVKMKKS) the chain is Cytoplasmic.

Belongs to the major facilitator superfamily. DHA1 family. NepI (TC 2.A.1.2.26) subfamily.

The protein localises to the cell inner membrane. The catalysed reaction is inosine(in) + H(+)(out) = inosine(out) + H(+)(in). It catalyses the reaction guanosine(in) + H(+)(out) = guanosine(out) + H(+)(in). Functionally, involved in the efflux of purine ribonucleosides, such as inosine and guanosine. In Escherichia coli O6:H1 (strain CFT073 / ATCC 700928 / UPEC), this protein is Purine ribonucleoside efflux pump NepI.